The following is a 164-amino-acid chain: NADH-quinone oxidoreductase subunit I (164 aa).

4Fe-4S ferredoxin-type domains are found at residues 55–85 and 95–124; these read LRRY…IDAE and TRYD…EGPN. Residues Cys-65, Cys-68, Cys-71, Cys-75, Cys-104, Cys-107, Cys-110, and Cys-114 each contribute to the [4Fe-4S] cluster site.

This sequence belongs to the complex I 23 kDa subunit family. As to quaternary structure, NDH-1 is composed of 14 different subunits. Subunits NuoA, H, J, K, L, M, N constitute the membrane sector of the complex. The cofactor is [4Fe-4S] cluster.

The protein localises to the cell inner membrane. It carries out the reaction a quinone + NADH + 5 H(+)(in) = a quinol + NAD(+) + 4 H(+)(out). Its function is as follows. NDH-1 shuttles electrons from NADH, via FMN and iron-sulfur (Fe-S) centers, to quinones in the respiratory chain. The immediate electron acceptor for the enzyme in this species is believed to be ubiquinone. Couples the redox reaction to proton translocation (for every two electrons transferred, four hydrogen ions are translocated across the cytoplasmic membrane), and thus conserves the redox energy in a proton gradient. The sequence is that of NADH-quinone oxidoreductase subunit I from Ruegeria sp. (strain TM1040) (Silicibacter sp.).